Reading from the N-terminus, the 409-residue chain is 2,3-bisphosphoglycerate-independent phosphoglycerate mutase 1 (409 aa).

A compositionally biased stretch (basic and acidic residues) spans 163–173 (SDADPKVEGKP). A disordered region spans residues 163 to 184 (SDADPKVEGKPPKKIKALDGSP).

Belongs to the BPG-independent phosphoglycerate mutase family. A-PGAM subfamily.

It carries out the reaction (2R)-2-phosphoglycerate = (2R)-3-phosphoglycerate. It functions in the pathway carbohydrate degradation; glycolysis; pyruvate from D-glyceraldehyde 3-phosphate: step 3/5. In terms of biological role, catalyzes the interconversion of 2-phosphoglycerate and 3-phosphoglycerate. This Methanothermobacter thermautotrophicus (strain ATCC 29096 / DSM 1053 / JCM 10044 / NBRC 100330 / Delta H) (Methanobacterium thermoautotrophicum) protein is 2,3-bisphosphoglycerate-independent phosphoglycerate mutase 1 (apgM1).